The following is a 199-amino-acid chain: Peptidyl-tRNA hydrolase (199 aa).

Tyr25 contributes to the tRNA binding site. The active-site Proton acceptor is the His30. Residues Tyr76, Asn78, and Asn124 each contribute to the tRNA site.

This sequence belongs to the PTH family. Monomer.

The protein localises to the cytoplasm. The catalysed reaction is an N-acyl-L-alpha-aminoacyl-tRNA + H2O = an N-acyl-L-amino acid + a tRNA + H(+). Functionally, hydrolyzes ribosome-free peptidyl-tRNAs (with 1 or more amino acids incorporated), which drop off the ribosome during protein synthesis, or as a result of ribosome stalling. Catalyzes the release of premature peptidyl moieties from peptidyl-tRNA molecules trapped in stalled 50S ribosomal subunits, and thus maintains levels of free tRNAs and 50S ribosomes. In Mycobacterium leprae (strain Br4923), this protein is Peptidyl-tRNA hydrolase.